The primary structure comprises 232 residues: tRNA (guanine-N(1)-)-methyltransferase (232 aa).

S-adenosyl-L-methionine-binding positions include glycine 111 and 131-136 (IGDYIL).

This sequence belongs to the RNA methyltransferase TrmD family. Homodimer.

It is found in the cytoplasm. The enzyme catalyses guanosine(37) in tRNA + S-adenosyl-L-methionine = N(1)-methylguanosine(37) in tRNA + S-adenosyl-L-homocysteine + H(+). In terms of biological role, specifically methylates guanosine-37 in various tRNAs. The sequence is that of tRNA (guanine-N(1)-)-methyltransferase from Bartonella bacilliformis (strain ATCC 35685 / KC583 / Herrer 020/F12,63).